We begin with the raw amino-acid sequence, 111 residues long: Large ribosomal subunit protein uL22 (111 aa).

It belongs to the universal ribosomal protein uL22 family. As to quaternary structure, part of the 50S ribosomal subunit.

In terms of biological role, this protein binds specifically to 23S rRNA; its binding is stimulated by other ribosomal proteins, e.g. L4, L17, and L20. It is important during the early stages of 50S assembly. It makes multiple contacts with different domains of the 23S rRNA in the assembled 50S subunit and ribosome. Functionally, the globular domain of the protein is located near the polypeptide exit tunnel on the outside of the subunit, while an extended beta-hairpin is found that lines the wall of the exit tunnel in the center of the 70S ribosome. This chain is Large ribosomal subunit protein uL22, found in Xylella fastidiosa (strain 9a5c).